A 367-amino-acid polypeptide reads, in one-letter code: MGEGSRRPSGMLMSVDLEPVQLVGPDGTPTAERRYHRDLPEETLRWLYEMMVVTRELDTEFVNLQRQGELALYTPCRGQEAAQVGAAACLRKTDWLFPQYRELGVYLVRGIPPGHVGVAWRGTWHGGLQFTTKCCAPMSVPIGTQTLHAVGAAMAAQRLDEDSVTVAFLGDGATSEGDVHEALNFAAVFTTPCVFYVQNNQWAISMPVSRQTAAPSIAHKAIGYGMPGIRVDGNDVLACYAVMAEAAARARAGDGPTLIEAVTYRLGPHTTADDPTRYRSQEEVDRWATLDPIPRYRTYLQDQGLWSQRLEEQVTARAKHVRSELRDAVFDAPDFDVDEVFTTVYAEITPGLQAQREQLRAELARTD.

Thiamine diphosphate contacts are provided by residues 99 to 101 (QYR), 141 to 142 (PI), 170 to 176 (GDGATSE), 200 to 204 (NQWAI), and His-269. Substrate is bound at residue Tyr-100. Residues Asp-171 and Asn-200 each coordinate Mg(2+).

Heteromer of E1 alpha (BkdA) and beta (BkdB) subunits. Part of the BCKADH complex, consisting of multiple copies of BkdA/BkdB (E1), BkdC (E2) and Lpd (E3). Mg(2+) is required as a cofactor. The cofactor is thiamine diphosphate.

The enzyme catalyses N(6)-[(R)-lipoyl]-L-lysyl-[protein] + 3-methyl-2-oxobutanoate + H(+) = N(6)-[(R)-S(8)-2-methylpropanoyldihydrolipoyl]-L-lysyl-[protein] + CO2. In terms of biological role, component of the branched-chain alpha-ketoacid dehydrogenase (BCKADH) complex, that catalyzes the overall conversion of branched-chain alpha-ketoacids to acyl-CoA and CO(2). The protein is 3-methyl-2-oxobutanoate dehydrogenase subunit alpha (bkdA) of Mycobacterium tuberculosis (strain CDC 1551 / Oshkosh).